The following is a 232-amino-acid chain: Thiamine import ATP-binding protein ThiQ (232 aa).

The ABC transporter domain occupies 2 to 230; the sequence is LKLTDITWLY…KASASALLGI (229 aa). 32-39 serves as a coordination point for ATP; that stretch reads GPSGAGKS.

The protein belongs to the ABC transporter superfamily. Thiamine importer (TC 3.A.1.19.1) family. In terms of assembly, the complex is composed of two ATP-binding proteins (ThiQ), two transmembrane proteins (ThiP) and a solute-binding protein (ThiB).

Its subcellular location is the cell inner membrane. The enzyme catalyses thiamine(out) + ATP + H2O = thiamine(in) + ADP + phosphate + H(+). In terms of biological role, part of the ABC transporter complex ThiBPQ involved in thiamine import. Responsible for energy coupling to the transport system. This chain is Thiamine import ATP-binding protein ThiQ, found in Escherichia coli (strain K12).